A 537-amino-acid polypeptide reads, in one-letter code: Sodium/hydrogen exchanger 9B2 (537 aa).

Over residues 1–10 (MGDEDKRITY) the composition is skewed to basic and acidic residues. The segment at 1 to 28 (MGDEDKRITYEDSEPSTGMNYTPSMHQE) is disordered. At 1-86 (MGDEDKRITY…ACPPHGLLDR (86 aa)) the chain is on the cytoplasmic side. A compositionally biased stretch (polar residues) spans 15-27 (PSTGMNYTPSMHQ). S49 bears the Phosphoserine mark. A helical transmembrane segment spans residues 87–104 (VITNVTIIVLLWAVVWSI). The Extracellular portion of the chain corresponds to 105–113 (TGSECLPGG). A helical transmembrane segment spans residues 114 to 133 (NLFGIIILFYCAIIGGKLLG). Over 134-144 (LIKLPTLPPLP) the chain is Cytoplasmic. Residues 145-161 (SLLGMLLAGFLIRNIPV) form a helical membrane-spanning segment. Topologically, residues 162–171 (INDNVQIKHK) are extracellular. A helical transmembrane segment spans residues 172–189 (WSSSLRSIALSIILVRAG). Residues 190–200 (LGLDSKALKKL) are Cytoplasmic-facing. The helical transmembrane segment at 201–227 (KGVCVRLSMGPCIVEACTSALLAHYLL) threads the bilayer. The Extracellular portion of the chain corresponds to 228–233 (GLPWQW). A helical membrane pass occupies residues 234 to 242 (GFILGFVLG). The Cytoplasmic portion of the chain corresponds to 243–270 (AVSPAVVVPSMLLLQGGGYGVEKGVPTL). Residues V244, G275, D278, and D279 each coordinate Na(+). Residues 271–290 (LMAAGSFDDILAITGFNTCL) traverse the membrane as a helical segment. Over 291–300 (GIAFSTGSTV) the chain is Extracellular. Residues 301-324 (FNVLRGVLEVVIGVATGSVLGFFI) form a helical membrane-spanning segment. At 325–339 (QYFPSRDQDKLVCKR) the chain is on the cytoplasmic side. Residues 340–357 (TFLVLGLSVLAVFSSVHF) form a helical membrane-spanning segment. Residues 358-361 (GFPG) are Extracellular-facing. The chain crosses the membrane as a helical span at residues 362-373 (SGGLCTLVMAFL). Over 374–390 (AGMGWTSEKAEVEKIIA) the chain is Cytoplasmic. Residues 391–411 (VAWDIFQPLLFGLIGAEVSIA) form a helical membrane-spanning segment. Topologically, residues 412–417 (SLRPET) are extracellular. The chain crosses the membrane as a helical span at residues 418 to 440 (VGLCVATVGIAVLIRILTTFLMV). Over 441–461 (CFAGFNLKEKIFISFAWLPKA) the chain is Cytoplasmic. Residues 462 to 473 (TVQAAIGSVALD) traverse the membrane as a helical segment. The Extracellular segment spans residues 474-486 (TARSHGEKQLEDY). A helical membrane pass occupies residues 487-509 (GMDVLTVAFLSILITAPIGSLLI). Residues 510-537 (GLLGPRLLQKVEHQNKDEEVQGETSVQV) are Cytoplasmic-facing.

The protein belongs to the monovalent cation:proton antiporter 1 (CPA1) transporter (TC 2.A.36) family. As to quaternary structure, homodimer. Dimerization is essential for SLC9B2 activity. Lipids seem to play a role in the stabilization of the dimerization subdomain. In terms of tissue distribution, widely expressed. High levels detected in the distal tubules of the kidney nephron. Detected in red blood cells (at protein level).

The protein resides in the cell membrane. It is found in the mitochondrion membrane. Its subcellular location is the endosome membrane. It localises to the recycling endosome membrane. The protein localises to the cytoplasmic vesicle. The protein resides in the secretory vesicle. It is found in the synaptic vesicle membrane. Its subcellular location is the cell projection. It localises to the cilium. The protein localises to the flagellum membrane. The protein resides in the basolateral cell membrane. It is found in the apical cell membrane. It catalyses the reaction Li(+)(out) + H(+)(in) = Li(+)(in) + H(+)(out). The enzyme catalyses Li(+)(in) + Na(+)(out) = Li(+)(out) + Na(+)(in). It carries out the reaction Na(+)(in) + H(+)(out) = Na(+)(out) + H(+)(in). Allosterically inhibited by the N-terminal domain. Inhibited by phloretin. Its function is as follows. Electroneutral Na(+) Li(+)/H(+) antiporter that extrudes Na(+) or Li(+) in exchange for external protons across the membrane. Uses the proton gradient/membrane potential to extrude sodium. Contributes to the regulation of intracellular pH and sodium homeostasis. Also able to mediate Na(+)/Li(+) antiporter activity in kidney. May play a physiological role in renal tubular function and blood pressure homeostasis. Plays an important role for insulin secretion and clathrin-mediated endocytosis in beta-cells. Involved in sperm motility and fertility. It is controversial whether SLC9B2 plays a role in osteoclast differentiation or not. This chain is Sodium/hydrogen exchanger 9B2, found in Homo sapiens (Human).